The following is a 98-amino-acid chain: Large ribosomal subunit protein uL23 (98 aa).

Belongs to the universal ribosomal protein uL23 family. Part of the 50S ribosomal subunit. Contacts protein L29, and trigger factor when it is bound to the ribosome.

In terms of biological role, one of the early assembly proteins it binds 23S rRNA. One of the proteins that surrounds the polypeptide exit tunnel on the outside of the ribosome. Forms the main docking site for trigger factor binding to the ribosome. The polypeptide is Large ribosomal subunit protein uL23 (Roseobacter denitrificans (strain ATCC 33942 / OCh 114) (Erythrobacter sp. (strain OCh 114))).